Consider the following 285-residue polypeptide: Ribosomal RNA small subunit methyltransferase A (285 aa).

Residues His27, Leu29, Gly54, Glu75, Asp100, and Asn120 each contribute to the S-adenosyl-L-methionine site.

It belongs to the class I-like SAM-binding methyltransferase superfamily. rRNA adenine N(6)-methyltransferase family. RsmA subfamily.

Its subcellular location is the cytoplasm. It catalyses the reaction adenosine(1518)/adenosine(1519) in 16S rRNA + 4 S-adenosyl-L-methionine = N(6)-dimethyladenosine(1518)/N(6)-dimethyladenosine(1519) in 16S rRNA + 4 S-adenosyl-L-homocysteine + 4 H(+). Specifically dimethylates two adjacent adenosines (A1518 and A1519) in the loop of a conserved hairpin near the 3'-end of 16S rRNA in the 30S particle. May play a critical role in biogenesis of 30S subunits. This Phenylobacterium zucineum (strain HLK1) protein is Ribosomal RNA small subunit methyltransferase A.